Here is a 373-residue protein sequence, read N- to C-terminus: UDP-3-O-acylglucosamine N-acyltransferase 2 (373 aa).

The active-site Proton acceptor is the histidine 257. The disordered stretch occupies residues 346–373 (DGRTAASAEAAAPSSDATGVDQPDQAAS). A compositionally biased stretch (low complexity) spans 350–362 (AASAEAAAPSSDA).

It belongs to the transferase hexapeptide repeat family. LpxD subfamily. In terms of assembly, homotrimer.

It carries out the reaction a UDP-3-O-[(3R)-3-hydroxyacyl]-alpha-D-glucosamine + a (3R)-hydroxyacyl-[ACP] = a UDP-2-N,3-O-bis[(3R)-3-hydroxyacyl]-alpha-D-glucosamine + holo-[ACP] + H(+). It functions in the pathway bacterial outer membrane biogenesis; LPS lipid A biosynthesis. Functionally, catalyzes the N-acylation of UDP-3-O-acylglucosamine using 3-hydroxyacyl-ACP as the acyl donor. Is involved in the biosynthesis of lipid A, a phosphorylated glycolipid that anchors the lipopolysaccharide to the outer membrane of the cell. The sequence is that of UDP-3-O-acylglucosamine N-acyltransferase 2 from Rhodopseudomonas palustris (strain BisB18).